We begin with the raw amino-acid sequence, 273 residues long: LOB domain-containing protein 20 (273 aa).

A compositionally biased stretch (basic and acidic residues) spans 1–15 (MADQQRGHNTSDSRR). Positions 1–39 (MADQQRGHNTSDSRRKSLAGKRTSQQTPTSSLSSGGVSM) are disordered. Low complexity predominate over residues 23–39 (TSQQTPTSSLSSGGVSM). One can recognise an LOB domain in the interval 50 to 152 (SPCGACKFLR…AELSVVQSQL (103 aa)). A disordered region spans residues 221–248 (LEHSLQPMPPHQQRRGDYQHEDEEESGA).

Belongs to the LOB domain-containing protein family. As to expression, expressed in roots and flowers.

This Arabidopsis thaliana (Mouse-ear cress) protein is LOB domain-containing protein 20 (LBD20).